A 940-amino-acid chain; its full sequence is Glutamate receptor 2.9 (940 aa).

An N-terminal signal peptide occupies residues 1–23 (MKTNNTFLSYFVCGFLLMGVGLG). Over 24–566 (QNQTSEIKVG…DTWVFLEPWS (543 aa)) the chain is Extracellular. 6 N-linked (GlcNAc...) asparagine glycosylation sites follow: N25, N39, N115, N338, N345, and N528. Residues 567–587 (LELWVTTGCFFVFIGFVVWLF) form a helical membrane-spanning segment. At 588 to 596 (EHRVNTDFR) the chain is on the cytoplasmic side. A helical transmembrane segment spans residues 597 to 617 (GPPQYQIGTSLWFSFSTMVFA). Topologically, residues 618–628 (HRENVVSNLAR) are cytoplasmic. The helical transmembrane segment at 629-649 (FVVVVWCFVVLVLTQSYTASL) threads the bilayer. Topologically, residues 650–811 (TSFLTVQSLQ…NRLNLSSFLG (162 aa)) are extracellular. N-linked (GlcNAc...) asparagine glycosylation is found at N771, N776, and N805. Residues 812 to 832 (LFLIAGTAISFSLLVFVALFL) traverse the membrane as a helical segment. Over 833–940 (YEHRHTLGDD…ESDIECRVEQ (108 aa)) the chain is Cytoplasmic. 2 disordered regions span residues 876-900 (ISSP…QSPS) and 914-940 (PSEE…RVEQ).

Belongs to the glutamate-gated ion channel (TC 1.A.10.1) family. In terms of assembly, may form heteromers. In terms of tissue distribution, expressed predominantly in roots.

The protein localises to the membrane. Glutamate-gated receptor that probably acts as a non-selective cation channel. May be involved in light-signal transduction and calcium homeostasis via the regulation of calcium influx into cells. The chain is Glutamate receptor 2.9 (GLR2.9) from Arabidopsis thaliana (Mouse-ear cress).